Consider the following 429-residue polypeptide: Mannose-6-phosphate isomerase (429 aa).

Positions 110, 112, 137, and 282 each coordinate Zn(2+). Arg301 is a catalytic residue.

The protein belongs to the mannose-6-phosphate isomerase type 1 family. The cofactor is Zn(2+).

The protein resides in the cytoplasm. The enzyme catalyses D-mannose 6-phosphate = D-fructose 6-phosphate. Its pathway is nucleotide-sugar biosynthesis; GDP-alpha-D-mannose biosynthesis; alpha-D-mannose 1-phosphate from D-fructose 6-phosphate: step 1/2. In terms of biological role, involved in the synthesis of the GDP-mannose and dolichol-phosphate-mannose required for a number of critical mannosyl transfer reactions. This Candida glabrata (strain ATCC 2001 / BCRC 20586 / JCM 3761 / NBRC 0622 / NRRL Y-65 / CBS 138) (Yeast) protein is Mannose-6-phosphate isomerase (PMI1).